A 495-amino-acid chain; its full sequence is uncharacterized protein (495 aa).

The N-terminal stretch at 1–17 is a signal peptide; that stretch reads MRTLSLLILFLSTFLFA.

This is an uncharacterized protein from Aquifex aeolicus (strain VF5).